The primary structure comprises 149 residues: Protein NrdI (149 aa).

Belongs to the NrdI family.

Its function is as follows. Probably involved in ribonucleotide reductase function. The sequence is that of Protein NrdI from Malacoplasma penetrans (strain HF-2) (Mycoplasma penetrans).